The following is a 284-amino-acid chain: NAD kinase (284 aa).

D70 serves as the catalytic Proton acceptor. Residues 70-71 (DG), 139-140 (NE), K167, D169, L177, 180-185 (TAYNLS), and Q236 each bind NAD(+).

This sequence belongs to the NAD kinase family. A divalent metal cation serves as cofactor.

It localises to the cytoplasm. It catalyses the reaction NAD(+) + ATP = ADP + NADP(+) + H(+). In terms of biological role, involved in the regulation of the intracellular balance of NAD and NADP, and is a key enzyme in the biosynthesis of NADP. Catalyzes specifically the phosphorylation on 2'-hydroxyl of the adenosine moiety of NAD to yield NADP. In Helicobacter pylori (strain J99 / ATCC 700824) (Campylobacter pylori J99), this protein is NAD kinase.